We begin with the raw amino-acid sequence, 173 residues long: Adenine phosphoribosyltransferase (173 aa).

The protein belongs to the purine/pyrimidine phosphoribosyltransferase family. Homodimer.

The protein localises to the cytoplasm. It catalyses the reaction AMP + diphosphate = 5-phospho-alpha-D-ribose 1-diphosphate + adenine. It functions in the pathway purine metabolism; AMP biosynthesis via salvage pathway; AMP from adenine: step 1/1. Functionally, catalyzes a salvage reaction resulting in the formation of AMP, that is energically less costly than de novo synthesis. In Methanococcus vannielii (strain ATCC 35089 / DSM 1224 / JCM 13029 / OCM 148 / SB), this protein is Adenine phosphoribosyltransferase.